The following is a 91-amino-acid chain: uncharacterized protein (91 aa).

The next 3 helical transmembrane spans lie at 9–29 (LIHA…YTAG), 30–50 (LGIF…VIFG), and 67–87 (WLGC…VLKF).

It localises to the cell membrane. This is an uncharacterized protein from Methanocaldococcus jannaschii (strain ATCC 43067 / DSM 2661 / JAL-1 / JCM 10045 / NBRC 100440) (Methanococcus jannaschii).